We begin with the raw amino-acid sequence, 132 residues long: Small ribosomal subunit protein uS8c (132 aa).

Belongs to the universal ribosomal protein uS8 family. As to quaternary structure, part of the 30S ribosomal subunit.

It localises to the plastid. The protein localises to the chloroplast. Functionally, one of the primary rRNA binding proteins, it binds directly to 16S rRNA central domain where it helps coordinate assembly of the platform of the 30S subunit. The chain is Small ribosomal subunit protein uS8c (rps8) from Anthoceros angustus (Hornwort).